A 245-amino-acid chain; its full sequence is Type III pantothenate kinase (245 aa).

6–13 serves as a coordination point for ATP; that stretch reads DQGNTILK. Substrate-binding positions include Y86 and 93–96; that span reads GTDR. Catalysis depends on D95, which acts as the Proton acceptor. Residue D116 coordinates K(+). Position 119 (T119) interacts with ATP. T171 is a substrate binding site.

This sequence belongs to the type III pantothenate kinase family. As to quaternary structure, homodimer. The cofactor is NH4(+). Requires K(+) as cofactor.

Its subcellular location is the cytoplasm. It carries out the reaction (R)-pantothenate + ATP = (R)-4'-phosphopantothenate + ADP + H(+). It functions in the pathway cofactor biosynthesis; coenzyme A biosynthesis; CoA from (R)-pantothenate: step 1/5. In terms of biological role, catalyzes the phosphorylation of pantothenate (Pan), the first step in CoA biosynthesis. The polypeptide is Type III pantothenate kinase (Azobacteroides pseudotrichonymphae genomovar. CFP2).